The chain runs to 400 residues: Elongation factor Tu (400 aa).

The region spanning 10–209 (KPHVNIGTIG…EVDNYIPTPE (200 aa)) is the tr-type G domain. The tract at residues 19–26 (GHVDHGKT) is G1. Residue 19–26 (GHVDHGKT) participates in GTP binding. Thr26 contributes to the Mg(2+) binding site. The G2 stretch occupies residues 60–64 (GITIN). The segment at 81–84 (DCPG) is G3. GTP contacts are provided by residues 81–85 (DCPGH) and 136–139 (NKCD). Positions 136 to 139 (NKCD) are G4. A G5 region spans residues 174-176 (SAL).

Belongs to the TRAFAC class translation factor GTPase superfamily. Classic translation factor GTPase family. EF-Tu/EF-1A subfamily. Monomer.

Its subcellular location is the cytoplasm. The enzyme catalyses GTP + H2O = GDP + phosphate + H(+). GTP hydrolase that promotes the GTP-dependent binding of aminoacyl-tRNA to the A-site of ribosomes during protein biosynthesis. In Ruminiclostridium cellulolyticum (strain ATCC 35319 / DSM 5812 / JCM 6584 / H10) (Clostridium cellulolyticum), this protein is Elongation factor Tu.